The primary structure comprises 276 residues: NADPH-dependent 7-cyano-7-deazaguanine reductase (276 aa).

83–85 is a binding site for substrate; it reads IES. 85–86 is an NADPH binding site; sequence SK. The active-site Thioimide intermediate is Cys184. Asp191 serves as the catalytic Proton donor. Substrate is bound at residue 223–224; that stretch reads HE. Residue 252–253 coordinates NADPH; it reads RG.

It belongs to the GTP cyclohydrolase I family. QueF type 2 subfamily. In terms of assembly, homodimer.

The protein resides in the cytoplasm. It catalyses the reaction 7-aminomethyl-7-carbaguanine + 2 NADP(+) = 7-cyano-7-deazaguanine + 2 NADPH + 3 H(+). It functions in the pathway tRNA modification; tRNA-queuosine biosynthesis. Its function is as follows. Catalyzes the NADPH-dependent reduction of 7-cyano-7-deazaguanine (preQ0) to 7-aminomethyl-7-deazaguanine (preQ1). The sequence is that of NADPH-dependent 7-cyano-7-deazaguanine reductase from Pseudomonas putida (strain W619).